Here is a 294-residue protein sequence, read N- to C-terminus: Proline iminopeptidase (294 aa).

Residues 27–277 form the AB hydrolase-1 domain; the sequence is PPLVLLHGGP…GCGHMSFVEK (251 aa). The active-site Nucleophile is the S105. Residue D244 is part of the active site. The active-site Proton donor is the H271.

It belongs to the peptidase S33 family.

The protein localises to the cell envelope. The enzyme catalyses Release of N-terminal proline from a peptide.. Its function is as follows. Releases the N-terminal proline from various substrates. The chain is Proline iminopeptidase from Lactobacillus helveticus (strain DPC 4571).